The following is a 127-amino-acid chain: Large ribosomal subunit protein bL12 (127 aa).

This sequence belongs to the bacterial ribosomal protein bL12 family. As to quaternary structure, homodimer. Part of the ribosomal stalk of the 50S ribosomal subunit. Forms a multimeric L10(L12)X complex, where L10 forms an elongated spine to which 2 to 4 L12 dimers bind in a sequential fashion. Binds GTP-bound translation factors.

Functionally, forms part of the ribosomal stalk which helps the ribosome interact with GTP-bound translation factors. Is thus essential for accurate translation. The polypeptide is Large ribosomal subunit protein bL12 (Streptomyces virginiae (Streptomyces cinnamonensis)).